Here is a 980-residue protein sequence, read N- to C-terminus: Glutamate receptor ionotropic, kainate 5 (980 aa).

The signal sequence occupies residues 1–14 (MPAELLLLLIVAFA). Over 15–544 (SPSCQVLSSL…YFSFLDPFSP (530 aa)) the chain is Extracellular. Intrachain disulfides connect C36/C292, C83/C334, and C165/C170. Residues N219, N271, N285, N322, N372, N394, N400, N407, N414, and N478 are each glycosylated (N-linked (GlcNAc...) asparagine). The helical transmembrane segment at 545–565 (AVWLFMLLAYLAVSCVLFLAA) threads the bilayer. Topologically, residues 566-622 (RLSPYEWYNPHPCLRARPHILENQYTLGNSLWFPVGGFMQQGSEIMPRALSTRCVSG) are cytoplasmic. A helical membrane pass occupies residues 623–643 (VWWAFTLIIISSYTANLAAFL). Over 644 to 803 (TVQRMEVPVE…HRAKGLGMEN (160 aa)) the chain is Extracellular. The N-linked (GlcNAc...) asparagine glycan is linked to N735. Residues 804–824 (IGGIFIVLICGLIIAVFVAVM) form a helical membrane-spanning segment. Over 825-980 (EFIWSTRRSA…AGPRELAEHE (156 aa)) the chain is Cytoplasmic. 2 disordered regions span residues 891-927 (YSAG…PTPC) and 944-980 (ASGA…AEHE). Residues 894–903 (GAGGDAGSAH) show a composition bias toward gly residues.

This sequence belongs to the glutamate-gated ion channel (TC 1.A.10.1) family. GRIK5 subfamily. As to quaternary structure, homotetramer. Heterotetramer with GRIK2. Can form functional heteromeric receptors with GRIK1 and GRIK2. Can form functional heteromeric receptors with GRIK3.

The protein localises to the cell membrane. The protein resides in the postsynaptic cell membrane. It localises to the presynaptic cell membrane. Its function is as follows. Ionotropic glutamate receptor that functions as a cation-permeable ligand-gated ion channel, gated by L-glutamate and the glutamatergic agonist kainic acid. Cannot form functional channels on its own and produces channel activity only in heteromeric assembly with GRIK1 and GRIK2 subunits. Can form functional heteromeric receptors with GRIK3. This chain is Glutamate receptor ionotropic, kainate 5 (GRIK5), found in Homo sapiens (Human).